Consider the following 374-residue polypeptide: N-acetyldiaminopimelate deacetylase (374 aa).

D69 is a catalytic residue. E128 serves as the catalytic Proton acceptor.

Belongs to the peptidase M20A family. N-acetyldiaminopimelate deacetylase subfamily.

It carries out the reaction N-acetyl-(2S,6S)-2,6-diaminopimelate + H2O = (2S,6S)-2,6-diaminopimelate + acetate. It participates in amino-acid biosynthesis; L-lysine biosynthesis via DAP pathway; LL-2,6-diaminopimelate from (S)-tetrahydrodipicolinate (acetylase route): step 3/3. Its function is as follows. Catalyzes the conversion of N-acetyl-diaminopimelate to diaminopimelate and acetate. The chain is N-acetyldiaminopimelate deacetylase (ykuR) from Bacillus subtilis (strain 168).